The sequence spans 87 residues: LYR motif-containing protein 2 (87 aa).

A mitochondrion-targeting transit peptide spans 1–19 (MGSRLPPAALTLKQFLVRQ).

It belongs to the complex I LYR family.

The protein localises to the mitochondrion. In terms of biological role, involved in efficient integration of the N-module into mitochondrial respiratory chain complex I. This is LYR motif-containing protein 2 (lyrm2) from Xenopus laevis (African clawed frog).